We begin with the raw amino-acid sequence, 398 residues long: tRNA N6-adenosine threonylcarbamoyltransferase (398 aa).

Histidine 162, histidine 166, and tyrosine 183 together coordinate a divalent metal cation. Substrate-binding positions include 183–187 (YVSGG), aspartate 215, glycine 230, glutamate 234, and asparagine 329. Aspartate 357 is an a divalent metal cation binding site.

It belongs to the KAE1 / TsaD family. Component of the EKC/KEOPS complex composed of at least BUD32, CGI121, GON7, KAE1 and PCC1; the whole complex dimerizes. Requires a divalent metal cation as cofactor.

The protein localises to the cytoplasm. It is found in the nucleus. The catalysed reaction is L-threonylcarbamoyladenylate + adenosine(37) in tRNA = N(6)-L-threonylcarbamoyladenosine(37) in tRNA + AMP + H(+). Functionally, component of the EKC/KEOPS complex that is required for the formation of a threonylcarbamoyl group on adenosine at position 37 (t(6)A37) in tRNAs that read codons beginning with adenine. The complex is probably involved in the transfer of the threonylcarbamoyl moiety of threonylcarbamoyl-AMP (TC-AMP) to the N6 group of A37. KAE1 likely plays a direct catalytic role in this reaction, but requires other protein(s) of the complex to fulfill this activity. The EKC/KEOPS complex also promotes both telomere uncapping and telomere elongation. The complex is required for efficient recruitment of transcriptional coactivators. In Cryptococcus neoformans var. neoformans serotype D (strain B-3501A) (Filobasidiella neoformans), this protein is tRNA N6-adenosine threonylcarbamoyltransferase.